Here is a 569-residue protein sequence, read N- to C-terminus: Urease subunit alpha (569 aa).

The region spanning 132–569 (GGIDSHIHFI…LPLAQRYFLF (438 aa)) is the Urease domain. Ni(2+) contacts are provided by His-137, His-139, and Lys-220. Lys-220 carries the N6-carboxylysine modification. His-222 contacts substrate. Ni(2+)-binding residues include His-249 and His-275. His-323 acts as the Proton donor in catalysis. Asp-363 contributes to the Ni(2+) binding site.

This sequence belongs to the metallo-dependent hydrolases superfamily. Urease alpha subunit family. As to quaternary structure, heterotrimer of UreA (gamma), UreB (beta) and UreC (alpha) subunits. Three heterotrimers associate to form the active enzyme. The cofactor is Ni cation. Carboxylation allows a single lysine to coordinate two nickel ions.

It localises to the cytoplasm. It carries out the reaction urea + 2 H2O + H(+) = hydrogencarbonate + 2 NH4(+). Its pathway is nitrogen metabolism; urea degradation; CO(2) and NH(3) from urea (urease route): step 1/1. In Dechloromonas aromatica (strain RCB), this protein is Urease subunit alpha.